The chain runs to 75 residues: Small ribosomal subunit protein bS18 (75 aa).

Belongs to the bacterial ribosomal protein bS18 family. Part of the 30S ribosomal subunit. Forms a tight heterodimer with protein bS6.

Binds as a heterodimer with protein bS6 to the central domain of the 16S rRNA, where it helps stabilize the platform of the 30S subunit. This Shewanella frigidimarina (strain NCIMB 400) protein is Small ribosomal subunit protein bS18.